A 505-amino-acid chain; its full sequence is Facilitated trehalose transporter Tret1 (505 aa).

The Cytoplasmic segment spans residues 1 to 46 (MEMEIKDENLRNSVPFVRQLSTDSVKTKTEYDNEDGTPYKSTTQKL). Residues 47-67 (FLWTQLLAAFAVSVGSMNVGF) form a helical membrane-spanning segment. The Extracellular segment spans residues 68 to 91 (SSGYTSPAVLTMNITLDITKEEIT). N-linked (GlcNAc...) asparagine glycosylation occurs at asparagine 80. The chain crosses the membrane as a helical span at residues 92 to 112 (WVGGLMPLAALVGGIVGGPLI). Topologically, residues 113–124 (EYLGRKKTIMGT) are cytoplasmic. The helical transmembrane segment at 125-145 (AVPFTIGWMLIANAINVVMVF) threads the bilayer. Residues 146–149 (AGRV) are Extracellular-facing. A helical membrane pass occupies residues 150–170 (ICGVCVGIVSLAFPVYIGETI). Over 171–175 (QPEVR) the chain is Cytoplasmic. The helical transmembrane segment at 176–196 (GALGLLPTAFGNTGILLAFLV) threads the bilayer. At 197-201 (GSYLD) the chain is on the extracellular side. The chain crosses the membrane as a helical span at residues 202-222 (WSNLAFFGAAIPVPFFLLMIL). Over 223–286 (TPETPRWYVS…QLFSKRYLPA (64 aa)) the chain is Cytoplasmic. Residues 287–307 (VMISLGLMLFQQLTGINAVIF) traverse the membrane as a helical segment. Residues 308-323 (YAASIFQMSGSSVDEN) lie on the Extracellular side of the membrane. A helical transmembrane segment spans residues 324–344 (LASIIIGVVNFISTFIATMLI). Residues 345–350 (DRLGRK) are Cytoplasmic-facing. The chain crosses the membrane as a helical span at residues 351 to 371 (VLLYISSVAMITTLLALGAYF). Over 372-390 (YLKQNHIDVTAYGWLPLAC) the chain is Extracellular. Residues 391–411 (LVIYVLGFSIGFGPIPWLMLG) traverse the membrane as a helical segment. The Cytoplasmic portion of the chain corresponds to 412–419 (EILPSKIR). Residues 420–437 (GTAASLATGFNWTCTFIV) form a helical membrane-spanning segment. The Extracellular segment spans residues 438 to 451 (TKTFQNIIDAIYMH). The helical transmembrane segment at 452–472 (GTLWLFAVICIGGLLFVIFFV) threads the bilayer. Over 473-505 (PETKGKSLEEIEMKLTSGSRRVRNISKQPENIC) the chain is Cytoplasmic.

It belongs to the major facilitator superfamily. Sugar transporter (TC 2.A.1.1) family. Trehalose transporter subfamily. As to expression, expressed in many larval tissues at a low level, moderate levels of expression are seen in testis and head and highest expression in muscle.

It is found in the cell membrane. High-capacity facilitative transporter for trehalose. Does not transport maltose, sucrose or lactose. Mediates the bidirectional transfer of trehalose. Responsible for the transport of trehalose synthesized in the fat body and the incorporation of trehalose into other tissues that require a carbon source, thereby regulating trehalose levels in the hemolymph. This Bombyx mori (Silk moth) protein is Facilitated trehalose transporter Tret1.